Consider the following 290-residue polypeptide: MFRILMFLATNIAVMVLISLVFSLFGFQGLLAQNGVDLDLQALLVYSAVIGFSGSIISLLISKFMAKRSMNVHVLEHPENDTERWLLRTVERQAEQANIGMPEVGIFVHASPNAFATGWNKNNALVAVSTGLLENMTQSEVEAVLAHEISHVANGDMVTMTLIQGVLNTFVVFLSRVIGHVVDRVVFKVERGHGPAFWIVSIISQVILGILASMIVMWFSRYREFRADAGGASIAGRNNMIAALKRLKQNQDAPPMPEEMAAFAISAGKVQKLFSSHPPLDKRIEALQKG.

2 helical membrane-spanning segments follow: residues 12 to 32 (IAVM…GLLA) and 42 to 62 (ALLV…LLIS). His-147 is a Zn(2+) binding site. Glu-148 is a catalytic residue. His-151 provides a ligand contact to Zn(2+). The next 2 membrane-spanning stretches (helical) occupy residues 162 to 182 (LIQG…GHVV) and 197 to 217 (FWIV…MIVM). Glu-224 contributes to the Zn(2+) binding site.

It belongs to the peptidase M48B family. Zn(2+) serves as cofactor.

It is found in the cell inner membrane. This is Protease HtpX from Pseudoalteromonas atlantica (strain T6c / ATCC BAA-1087).